The sequence spans 260 residues: 5'-nucleotidase SurE (260 aa).

4 residues coordinate a divalent metal cation: Asp-10, Asp-11, Ser-41, and Asn-95.

It belongs to the SurE nucleotidase family. A divalent metal cation serves as cofactor.

The protein localises to the cytoplasm. It catalyses the reaction a ribonucleoside 5'-phosphate + H2O = a ribonucleoside + phosphate. Functionally, nucleotidase that shows phosphatase activity on nucleoside 5'-monophosphates. In Methanoregula boonei (strain DSM 21154 / JCM 14090 / 6A8), this protein is 5'-nucleotidase SurE.